Reading from the N-terminus, the 95-residue chain is Acylphosphatase (95 aa).

The region spanning 10–95 (CIHVTVSGKV…VEDYSDFRVR (86 aa)) is the Acylphosphatase-like domain. Catalysis depends on residues R25 and N43.

It belongs to the acylphosphatase family.

The catalysed reaction is an acyl phosphate + H2O = a carboxylate + phosphate + H(+). The protein is Acylphosphatase (acyP) of Coxiella burnetii (strain RSA 493 / Nine Mile phase I).